Consider the following 274-residue polypeptide: 4-hydroxy-3-methylbut-2-enyl diphosphate reductase (274 aa).

Position 12 (cysteine 12) interacts with [4Fe-4S] cluster. (2E)-4-hydroxy-3-methylbut-2-enyl diphosphate-binding residues include histidine 36 and histidine 70. Dimethylallyl diphosphate contacts are provided by histidine 36 and histidine 70. 2 residues coordinate isopentenyl diphosphate: histidine 36 and histidine 70. Cysteine 92 is a binding site for [4Fe-4S] cluster. Residue histidine 120 coordinates (2E)-4-hydroxy-3-methylbut-2-enyl diphosphate. Histidine 120 is a dimethylallyl diphosphate binding site. Position 120 (histidine 120) interacts with isopentenyl diphosphate. Catalysis depends on glutamate 122, which acts as the Proton donor. A (2E)-4-hydroxy-3-methylbut-2-enyl diphosphate-binding site is contributed by threonine 158. [4Fe-4S] cluster is bound at residue cysteine 186. (2E)-4-hydroxy-3-methylbut-2-enyl diphosphate is bound by residues serine 214, serine 215, asparagine 216, and serine 258. Dimethylallyl diphosphate contacts are provided by serine 214, serine 215, asparagine 216, and serine 258. Serine 214, serine 215, asparagine 216, and serine 258 together coordinate isopentenyl diphosphate.

This sequence belongs to the IspH family. The cofactor is [4Fe-4S] cluster.

The catalysed reaction is isopentenyl diphosphate + 2 oxidized [2Fe-2S]-[ferredoxin] + H2O = (2E)-4-hydroxy-3-methylbut-2-enyl diphosphate + 2 reduced [2Fe-2S]-[ferredoxin] + 2 H(+). The enzyme catalyses dimethylallyl diphosphate + 2 oxidized [2Fe-2S]-[ferredoxin] + H2O = (2E)-4-hydroxy-3-methylbut-2-enyl diphosphate + 2 reduced [2Fe-2S]-[ferredoxin] + 2 H(+). The protein operates within isoprenoid biosynthesis; dimethylallyl diphosphate biosynthesis; dimethylallyl diphosphate from (2E)-4-hydroxy-3-methylbutenyl diphosphate: step 1/1. It functions in the pathway isoprenoid biosynthesis; isopentenyl diphosphate biosynthesis via DXP pathway; isopentenyl diphosphate from 1-deoxy-D-xylulose 5-phosphate: step 6/6. Its function is as follows. Catalyzes the conversion of 1-hydroxy-2-methyl-2-(E)-butenyl 4-diphosphate (HMBPP) into a mixture of isopentenyl diphosphate (IPP) and dimethylallyl diphosphate (DMAPP). Acts in the terminal step of the DOXP/MEP pathway for isoprenoid precursor biosynthesis. The sequence is that of 4-hydroxy-3-methylbut-2-enyl diphosphate reductase from Campylobacter curvus (strain 525.92).